Here is a 413-residue protein sequence, read N- to C-terminus: Alpha-1-antitrypsin-like protein CM55-MS (413 aa).

Residues 1-24 (MPSSISWGLLLLAALSCLGPGSLA) form the signal peptide. Gln-25 is modified (pyrrolidone carboxylic acid). 4 N-linked (GlcNAc...) asparagine glycosylation sites follow: Asn-65, Asn-102, Asn-165, and Asn-266. An RCL region spans residues 368–387 (GATVGGITFMSRPKEVIFDR).

The protein belongs to the serpin family. As to expression, expressed in liver.

It is found in the secreted. Its function is as follows. Serine protease inhibitor. This is Alpha-1-antitrypsin-like protein CM55-MS from Tamias sibiricus (Siberian chipmunk).